The following is a 384-amino-acid chain: Dual-specificity RNA methyltransferase RlmN (384 aa).

The active-site Proton acceptor is glutamate 105. The Radical SAM core domain occupies 111–350 (EDDRATLCVS…TIVRKTRGDD (240 aa)). A disulfide bridge links cysteine 118 with cysteine 355. [4Fe-4S] cluster is bound by residues cysteine 125, cysteine 129, and cysteine 132. S-adenosyl-L-methionine contacts are provided by residues 179–180 (GE), serine 211, 233–235 (SLH), and asparagine 312. The active-site S-methylcysteine intermediate is cysteine 355.

The protein belongs to the radical SAM superfamily. RlmN family. [4Fe-4S] cluster is required as a cofactor.

It is found in the cytoplasm. The enzyme catalyses adenosine(2503) in 23S rRNA + 2 reduced [2Fe-2S]-[ferredoxin] + 2 S-adenosyl-L-methionine = 2-methyladenosine(2503) in 23S rRNA + 5'-deoxyadenosine + L-methionine + 2 oxidized [2Fe-2S]-[ferredoxin] + S-adenosyl-L-homocysteine. It catalyses the reaction adenosine(37) in tRNA + 2 reduced [2Fe-2S]-[ferredoxin] + 2 S-adenosyl-L-methionine = 2-methyladenosine(37) in tRNA + 5'-deoxyadenosine + L-methionine + 2 oxidized [2Fe-2S]-[ferredoxin] + S-adenosyl-L-homocysteine. In terms of biological role, specifically methylates position 2 of adenine 2503 in 23S rRNA and position 2 of adenine 37 in tRNAs. m2A2503 modification seems to play a crucial role in the proofreading step occurring at the peptidyl transferase center and thus would serve to optimize ribosomal fidelity. In Escherichia coli O157:H7, this protein is Dual-specificity RNA methyltransferase RlmN.